The following is a 418-amino-acid chain: MSKVELNKETGPREVFCGLTSIVWLHRRMPDAFFLVVGSRTCAHLIQSAAGVMIFAEPRFGTAILEEKDLAGLADAHEELDRVVNDLISRRPEIKTLFLVGSCPSEVIKLDLATVSEKLNKRFLGQVRFVNYSGSGIETTFTQGEDGALKALVPLMESTDDEKLLLVGTLANNVEDRFKKIFNHIGITNVESFPPRQSTELPKIGKNTKVLLTQPYLSDTVRDLKHRGCEIIYAPFPLGVEGSSKWFLAGADAFKINELKVHEVIAPLANRARQALEKHTEILRGKKLFLLPESQLEISLARFLHNECGMELIEVGTPYLNKDLMDEELNLLPDDTKIVEGQHVEKQLDRVRATSPDLVVCGMGLANPLEAEGISTKWSIEMVFSPIHGIDQAADLAGLFSRPLKRNQILTSKTLATH.

[4Fe-4S] cluster is bound by residues cysteine 17, cysteine 42, and cysteine 103.

The protein belongs to the BchN/ChlN family. In terms of assembly, protochlorophyllide reductase is composed of three subunits; ChlL, ChlN and ChlB. Forms a heterotetramer of two ChlB and two ChlN subunits. [4Fe-4S] cluster is required as a cofactor.

It catalyses the reaction chlorophyllide a + oxidized 2[4Fe-4S]-[ferredoxin] + 2 ADP + 2 phosphate = protochlorophyllide a + reduced 2[4Fe-4S]-[ferredoxin] + 2 ATP + 2 H2O. The protein operates within porphyrin-containing compound metabolism; chlorophyll biosynthesis (light-independent). In terms of biological role, component of the dark-operative protochlorophyllide reductase (DPOR) that uses Mg-ATP and reduced ferredoxin to reduce ring D of protochlorophyllide (Pchlide) to form chlorophyllide a (Chlide). This reaction is light-independent. The NB-protein (ChlN-ChlB) is the catalytic component of the complex. This is Light-independent protochlorophyllide reductase subunit N from Prochlorococcus marinus (strain MIT 9312).